The following is a 155-amino-acid chain: uncharacterized protein (155 aa).

Residues 6–155 (TCVRNARLAD…CDEIAMVKTL (150 aa)) form the N-acetyltransferase domain.

Belongs to the acetyltransferase family.

This is an uncharacterized protein from Chlorobaculum tepidum (strain ATCC 49652 / DSM 12025 / NBRC 103806 / TLS) (Chlorobium tepidum).